Reading from the N-terminus, the 266-residue chain is Beta-lactamase OXA-20 (266 aa).

Residues 1-21 (MIIRFLALLFSAVVLVSLGHA) form the signal peptide. Ser72 serves as the catalytic Acyl-ester intermediate. Lys75 is modified (N6-carboxylysine). Residue 210-212 (KTG) participates in substrate binding.

The protein belongs to the class-D beta-lactamase family.

It catalyses the reaction a beta-lactam + H2O = a substituted beta-amino acid. With respect to regulation, inhibited by clavulanic acid. Functionally, this is an oxacillin-hydrolyzing beta-lactamase. The chain is Beta-lactamase OXA-20 (bla) from Pseudomonas aeruginosa.